Reading from the N-terminus, the 372-residue chain is Putative aminopeptidase SgcX (372 aa).

The a divalent metal cation site is built by His67 and Asp180. The Proton acceptor role is filled by Glu212. A divalent metal cation contacts are provided by Glu213, Asp235, and His329.

It belongs to the peptidase M42 family. The cofactor is a divalent metal cation.

The chain is Putative aminopeptidase SgcX (sgcX) from Salmonella typhi.